The following is a 103-amino-acid chain: U-scoloptoxin(24)-Er1a (103 aa).

Positions 1 to 23 are cleaved as a signal peptide; it reads MVKSLHCLIGIVLFLAILNAGNG.

It belongs to the scoloptoxin-24 family. In terms of processing, contains 1 disulfide bond. Expressed by the venom gland.

The protein resides in the secreted. The protein is U-scoloptoxin(24)-Er1a of Ethmostigmus rubripes (Giant centipede).